The sequence spans 281 residues: NADPH-dependent 7-cyano-7-deazaguanine reductase (281 aa).

Residue 89 to 91 participates in substrate binding; sequence VES. An NADPH-binding site is contributed by 91–92; sequence SK. The active-site Thioimide intermediate is the Cys188. Asp195 functions as the Proton donor in the catalytic mechanism. 227–228 contacts substrate; the sequence is HE. Position 256–257 (256–257) interacts with NADPH; sequence RG.

The protein belongs to the GTP cyclohydrolase I family. QueF type 2 subfamily. Homodimer.

The protein localises to the cytoplasm. It catalyses the reaction 7-aminomethyl-7-carbaguanine + 2 NADP(+) = 7-cyano-7-deazaguanine + 2 NADPH + 3 H(+). Its pathway is tRNA modification; tRNA-queuosine biosynthesis. Catalyzes the NADPH-dependent reduction of 7-cyano-7-deazaguanine (preQ0) to 7-aminomethyl-7-deazaguanine (preQ1). The polypeptide is NADPH-dependent 7-cyano-7-deazaguanine reductase (Azoarcus sp. (strain BH72)).